Consider the following 379-residue polypeptide: Anhydro-N-acetylmuramic acid kinase (379 aa).

Residue 9–16 (GTSADGVD) participates in ATP binding.

Belongs to the anhydro-N-acetylmuramic acid kinase family.

It carries out the reaction 1,6-anhydro-N-acetyl-beta-muramate + ATP + H2O = N-acetyl-D-muramate 6-phosphate + ADP + H(+). It functions in the pathway amino-sugar metabolism; 1,6-anhydro-N-acetylmuramate degradation. Its pathway is cell wall biogenesis; peptidoglycan recycling. Functionally, catalyzes the specific phosphorylation of 1,6-anhydro-N-acetylmuramic acid (anhMurNAc) with the simultaneous cleavage of the 1,6-anhydro ring, generating MurNAc-6-P. Is required for the utilization of anhMurNAc either imported from the medium or derived from its own cell wall murein, and thus plays a role in cell wall recycling. The chain is Anhydro-N-acetylmuramic acid kinase from Prochlorococcus marinus (strain MIT 9303).